The chain runs to 166 residues: NSNIDKIPFHPYFTFKDIVGFIVMIFLLISLVLINPNLLGDPDNFIPANPLVTPAHIQPEWYFLFAYAILRSIPNKLGGVIALVLSIAILMILPFYNLSKFRGIQFYPINQILFWIMLVTVILLTWIGARPVEEPYVLLGQILTVIYFLYYLINPLVSKWWDNLLN.

The next 4 helical transmembrane spans lie at 15–35, 77–97, 109–129, and 136–156; these read FKDI…VLIN, LGGV…PFYN, INQI…WIGA, and YVLL…INPL.

The protein belongs to the cytochrome b family. As to quaternary structure, the main subunits of complex b-c1 are: cytochrome b, cytochrome c1 and the Rieske protein. Heme serves as cofactor.

The protein localises to the mitochondrion inner membrane. Component of the ubiquinol-cytochrome c reductase complex (complex III or cytochrome b-c1 complex) that is part of the mitochondrial respiratory chain. The b-c1 complex mediates electron transfer from ubiquinol to cytochrome c. Contributes to the generation of a proton gradient across the mitochondrial membrane that is then used for ATP synthesis. The polypeptide is Cytochrome b (mt:Cyt-b) (Drosophila subobscura (Fruit fly)).